We begin with the raw amino-acid sequence, 327 residues long: GTPase Obg (327 aa).

One can recognise an Obg domain in the interval 2–160 (HLFKDSLNLI…LNLRLELSLI (159 aa)). Positions 161-326 (ADVGLVGLPN…LVSEFFSLAK (166 aa)) constitute an OBG-type G domain. GTP is bound by residues 167–174 (GLPNAGKS), 192–196 (FTTKI), 213–216 (DLPG), 280–283 (SKLD), and 307–309 (SIY). Residues S174 and T194 each coordinate Mg(2+).

Belongs to the TRAFAC class OBG-HflX-like GTPase superfamily. OBG GTPase family. Monomer. It depends on Mg(2+) as a cofactor.

It is found in the cytoplasm. Its function is as follows. An essential GTPase which binds GTP, GDP and possibly (p)ppGpp with moderate affinity, with high nucleotide exchange rates and a fairly low GTP hydrolysis rate. Plays a role in control of the cell cycle, stress response, ribosome biogenesis and in those bacteria that undergo differentiation, in morphogenesis control. The chain is GTPase Obg from Borrelia recurrentis (strain A1).